The chain runs to 89 residues: Small ribosomal subunit protein uS15 (89 aa).

Positions 1 to 25 (MSLDTTEKQQLINTHQTHGTDTGSA) are disordered. Positions 8-25 (KQQLINTHQTHGTDTGSA) are enriched in polar residues.

It belongs to the universal ribosomal protein uS15 family. As to quaternary structure, part of the 30S ribosomal subunit. Forms a bridge to the 50S subunit in the 70S ribosome, contacting the 23S rRNA.

In terms of biological role, one of the primary rRNA binding proteins, it binds directly to 16S rRNA where it helps nucleate assembly of the platform of the 30S subunit by binding and bridging several RNA helices of the 16S rRNA. Functionally, forms an intersubunit bridge (bridge B4) with the 23S rRNA of the 50S subunit in the ribosome. This Synechococcus sp. (strain CC9902) protein is Small ribosomal subunit protein uS15.